The following is a 231-amino-acid chain: Small ribosomal subunit protein uS3 (231 aa).

The 69-residue stretch at 39–107 (IRKFIMKTLP…GVSLNIVEIR (69 aa)) folds into the KH type-2 domain.

It belongs to the universal ribosomal protein uS3 family. Part of the 30S ribosomal subunit. Forms a tight complex with proteins S10 and S14.

Its function is as follows. Binds the lower part of the 30S subunit head. Binds mRNA in the 70S ribosome, positioning it for translation. This is Small ribosomal subunit protein uS3 from Zymomonas mobilis subsp. mobilis (strain ATCC 31821 / ZM4 / CP4).